Here is a 715-residue protein sequence, read N- to C-terminus: MKKSLSLFAIFILTFLGLVIPFITLTAFRPLNEEQYTLKQESSTGKGINETDFINTMFLRSSFFENWSETNYFINPTLKTSKNLLFNDKWYLDFLQDSYSTGVVYDKPGEIFLNYYRQWHSLKNKYMVEKFYDVKKENFLNDLTDFIYAFAVKYKMFDVSKEIVENVDRYKENHYPRVKLKQDNWKLITDYNWLKDNFDNKYYFVIWKQSYSKEWEIMKFKHNMRYDMKIESYIKNNSFKGLYRWDGDGEPQTPTIDKNTGEITDWNSYQQSRVKQFIDLSLYSVLQENIRVQQGGSADYENPNKVGTKRIIFDFETVDELDVKNIKKAIYRMILTVDEANLIISGSLELNNINNDDLSFNFSFMRTGMGEVFNFNGSIYSSLNSKDLKYYQQFSGQFDLSKFLQSFFASALVPVFQNRSLFIENGYIDNLQYDTVLVNFFALKLQNFNNILLIENINDKLQFDKLLNSMFKISQKFYTNYLRTIFDLENNTYVQGYNKKYGLLVNNGFKIYPRYFYFSDKYKQLDIKLYSAFKNRFYTINNYGSVFNYDFSVANNYNIKLNSGYVFGGDLQNKYGLQYKKIEEQKIGYNVFELQAQKENDMYRYYDFNFGIYNWQEINNGGLFPDKQWWQVQYVTPKGWWDFGAHIKNAVIWIVNTIPGVKQVNELASGVGKVFETVYSFFSQIFEVWKFNPALYSTITNIFLLIIFMKFVRLI.

A helical membrane pass occupies residues 688–708; sequence VWKFNPALYSTITNIFLLIIF.

The protein belongs to the plectrovirus ORF1 family.

It localises to the host membrane. This is an uncharacterized protein from Spiroplasma virus SpV1-R8A2 B (SpV1).